Reading from the N-terminus, the 144-residue chain is Large ribosomal subunit protein uL11 (144 aa).

The protein belongs to the universal ribosomal protein uL11 family. In terms of assembly, part of the ribosomal stalk of the 50S ribosomal subunit. Interacts with L10 and the large rRNA to form the base of the stalk. L10 forms an elongated spine to which L12 dimers bind in a sequential fashion forming a multimeric L10(L12)X complex. One or more lysine residues are methylated.

In terms of biological role, forms part of the ribosomal stalk which helps the ribosome interact with GTP-bound translation factors. The protein is Large ribosomal subunit protein uL11 of Corynebacterium efficiens (strain DSM 44549 / YS-314 / AJ 12310 / JCM 11189 / NBRC 100395).